The chain runs to 404 residues: Phosphopentomutase (404 aa).

Mn(2+) contacts are provided by Asp10, Asp303, His308, Asp344, His345, and His356.

It belongs to the phosphopentomutase family. Mn(2+) is required as a cofactor.

It is found in the cytoplasm. It carries out the reaction 2-deoxy-alpha-D-ribose 1-phosphate = 2-deoxy-D-ribose 5-phosphate. The enzyme catalyses alpha-D-ribose 1-phosphate = D-ribose 5-phosphate. Its pathway is carbohydrate degradation; 2-deoxy-D-ribose 1-phosphate degradation; D-glyceraldehyde 3-phosphate and acetaldehyde from 2-deoxy-alpha-D-ribose 1-phosphate: step 1/2. Isomerase that catalyzes the conversion of deoxy-ribose 1-phosphate (dRib-1-P) and ribose 1-phosphate (Rib-1-P) to deoxy-ribose 5-phosphate (dRib-5-P) and ribose 5-phosphate (Rib-5-P), respectively. This is Phosphopentomutase from Shewanella sp. (strain MR-4).